The following is a 127-amino-acid chain: Fluoride-specific ion channel FluC (127 aa).

4 consecutive transmembrane segments (helical) span residues 4–24 (LDYL…YLVS), 39–59 (GTII…FAAI), 68–88 (AILF…TFTY), and 102–122 (VAYA…GMIL). Residues glycine 78 and threonine 81 each contribute to the Na(+) site.

This sequence belongs to the fluoride channel Fluc/FEX (TC 1.A.43) family.

It is found in the cell inner membrane. The enzyme catalyses fluoride(in) = fluoride(out). Its activity is regulated as follows. Na(+) is not transported, but it plays an essential structural role and its presence is essential for fluoride channel function. Fluoride-specific ion channel. Important for reducing fluoride concentration in the cell, thus reducing its toxicity. The chain is Fluoride-specific ion channel FluC from Thermotoga petrophila (strain ATCC BAA-488 / DSM 13995 / JCM 10881 / RKU-1).